The following is a 385-amino-acid chain: Multidrug export protein AcrE (385 aa).

A signal peptide spans M1–G23. Residue C24 is the site of N-palmitoyl cysteine attachment. C24 carries the S-diacylglycerol cysteine lipid modification. The segment at A366 to K385 is disordered. Polar residues predominate over residues K373–K385.

Belongs to the membrane fusion protein (MFP) (TC 8.A.1) family. As to quaternary structure, part of the tripartite efflux system AcrEF-TolC, which is composed of an inner membrane transporter, AcrF, a periplasmic membrane fusion protein, AcrE, and an outer membrane component, TolC. The complex forms a large protein conduit and can translocate molecules across both the inner and outer membranes.

It is found in the cell inner membrane. In terms of biological role, part of the tripartite efflux system AcrEF-TolC. Involved in the efflux of indole and organic solvents. This is Multidrug export protein AcrE (acrE) from Escherichia coli (strain K12).